A 244-amino-acid polypeptide reads, in one-letter code: Krueppel-like factor 9 (244 aa).

Disordered regions lie at residues 24–51 and 80–142; these read VPEH…GDPG and SVCS…SEKR. Positions 32–51 are enriched in basic and acidic residues; it reads DAERLRLPEREVTKEHGDPG. The residue at position 122 (serine 122) is a Phosphoserine. 3 C2H2-type zinc fingers span residues 143–167, 173–197, and 203–225; these read HKCP…YRVH, FPCT…YRTH, and FRCP…ARRH.

Belongs to the Sp1 C2H2-type zinc-finger protein family. Interacts with ZZEF1.

It is found in the nucleus. Transcription factor that binds to GC box promoter elements. Selectively activates mRNA synthesis from genes containing tandem repeats of GC boxes but represses genes with a single GC box. Acts as an epidermal circadian transcription factor regulating keratinocyte proliferation. The protein is Krueppel-like factor 9 (KLF9) of Sus scrofa (Pig).